The chain runs to 344 residues: MSNADQHMDVDEDEYLYGETIEERNDGVTVSNAKSPEQASEESDDSDIEFIIETKPGERAEPLGGSIATLGSTRPSAKPQVEKTAVEVKTTEPQDLSTAETAPKVDIDAVPTIDGKNIFEIDLESFDDKPWRKPGADISDYFNYGFDEFTWAAYCAKQTTLRDDFSPQKFMASLAQIPGPLPSGNVPSPAEFQAMMASGFPPFMPIPPPIGGPQEDMGYSRNFPVHASSNYNTTHTSGGGVHSGAATPNAYVNNNPSSSRRESESPANSPNITSSAGMTHAQPTHNPTSSYGNGASTNYNASRPPSNHPHSSNYPSSSRRKPSPDRYSNYSSRGSGGRYRRNRY.

2 disordered regions span residues 1–99 (MSNA…LSTA) and 230–344 (NYNT…RNRY). Over residues 28 to 38 (VTVSNAKSPEQ) the composition is skewed to polar residues. A compositionally biased stretch (acidic residues) spans 39 to 50 (ASEESDDSDIEF). Basic and acidic residues predominate over residues 80–92 (QVEKTAVEVKTTE). The span at 243 to 258 (SGAATPNAYVNNNPSS) shows a compositional bias: low complexity. A compositionally biased stretch (polar residues) spans 271–301 (NITSSAGMTHAQPTHNPTSSYGNGASTNYNA). Low complexity predominate over residues 302-317 (SRPPSNHPHSSNYPSS).

It belongs to the FIP1 family.

It is found in the nucleus. Pre-mRNA polyadenylation factor that directly interacts with poly(A) polymerase. The polypeptide is Pre-mRNA polyadenylation factor fip1 (Schizosaccharomyces pombe (strain 972 / ATCC 24843) (Fission yeast)).